The following is a 154-amino-acid chain: Protein X (154 aa).

The interval 68–117 (PCALRFTSARCMATTVNAHQILPKVLHKRTLGLPAMSTTDLEAYFKDCLF) is mitochondrial targeting sequence.

The protein belongs to the orthohepadnavirus protein X family. May form homodimer. May interact with host CEBPA, CFLAR, CREB1, DDB1, E4F1, HBXIP, HSPD1/HSP60, NFKBIA, POLR2E and SMAD4. Interacts with host SMC5-SMC6 complex and induces its degradation. Interacts with host TRPC4AP; leading to prevent ubiquitination of TRPC4AP. Interacts with host PLSCR1; this interaction promotes ubiquitination and degradation of HBx and impairs HBx-mediated cell proliferation. Post-translationally, a fraction may be phosphorylated in insect cells and HepG2 cells, a human hepatoblastoma cell line. Phosphorylated in vitro by host protein kinase C or mitogen-activated protein kinase. N-acetylated in insect cells.

Its subcellular location is the host cytoplasm. The protein resides in the host nucleus. It is found in the host mitochondrion. Its function is as follows. Multifunctional protein that plays a role in silencing host antiviral defenses and promoting viral transcription. Does not seem to be essential for HBV infection. May be directly involved in development of cirrhosis and liver cancer (hepatocellular carcinoma). Most of cytosolic activities involve modulation of cytosolic calcium. The effect on apoptosis is controversial depending on the cell types in which the studies have been conducted. May induce apoptosis by localizing in mitochondria and causing loss of mitochondrial membrane potential. May also modulate apoptosis by binding host CFLAR, a key regulator of the death-inducing signaling complex (DISC). Promotes viral transcription by using the host E3 ubiquitin ligase DDB1 to target the SMC5-SMC6 complex to proteasomal degradation. This host complex would otherwise bind to viral episomal DNA, and prevents its transcription. Moderately stimulates transcription of many different viral and cellular transcription elements. Promoters and enhancers stimulated by HBx contain DNA binding sites for NF-kappa-B, AP-1, AP-2, c-EBP, ATF/CREB, or the calcium-activated factor NF-AT. The protein is Protein X of Hepatitis B virus genotype A3 (isolate Cameroon/CMR983/1994) (HBV-A).